Here is a 188-residue protein sequence, read N- to C-terminus: MKGLIIVGSAKVGSHTTALSQYLKGHFEEHDFDVEIFDLAEQPIHQLDVSGASNLSESYKNNLQTLKTKAREADFFVLGSPNYHGSYSGILKNALDHLTMDDFKMKPVGLIGNSGGIVSSEPLSHLRLIVRSLLGIAVPTQIATHDTDFKKLDDGTYYLANEEFQLRARLFVDQIISFVKNSPYEHLK.

Belongs to the azoreductase type 2 family. Homotetramer. FMN is required as a cofactor.

Functionally, catalyzes the reductive cleavage of azo bond in aromatic azo compounds to the corresponding amines. Requires NADPH, but not NADH, as an electron donor for its activity. The polypeptide is FMN-dependent NADPH-azoreductase (azo1) (Staphylococcus saprophyticus subsp. saprophyticus (strain ATCC 15305 / DSM 20229 / NCIMB 8711 / NCTC 7292 / S-41)).